The following is a 162-amino-acid chain: uncharacterized protein (162 aa).

The N-terminal stretch at 1 to 18 (MRKTFLTLLCVSSAIAHA) is a signal peptide.

It belongs to the fimbrial protein family.

Part of the yfcOPQRSUV fimbrial operon. Could contribute to adhesion to various surfaces in specific environmental niches. Increases adhesion to eukaryotic T24 bladder epithelial cells in the absence of fim genes. This is an uncharacterized protein from Escherichia coli (strain K12).